A 315-amino-acid polypeptide reads, in one-letter code: Probable serine acetyltransferase 4 (315 aa).

Residues 287-315 form a disordered region; it reads AKPIIGKKAAPQRRPEELPGVTMEQRWSD.

It belongs to the transferase hexapeptide repeat family. In terms of assembly, homomultimer.

The enzyme catalyses L-serine + acetyl-CoA = O-acetyl-L-serine + CoA. It functions in the pathway amino-acid biosynthesis; L-cysteine biosynthesis; L-cysteine from L-serine: step 1/2. The polypeptide is Probable serine acetyltransferase 4 (SAT4) (Oryza sativa subsp. japonica (Rice)).